We begin with the raw amino-acid sequence, 522 residues long: Calcium-dependent protein kinase 4 (522 aa).

Residues 1–10 (MGACFSSHTA) are compositionally biased toward polar residues. The segment at 1–43 (MGACFSSHTATAAADGGSGKRQQRKGDHKGKLPDGGGGEKEKE) is disordered. Glycine 2 carries the N-myristoyl glycine lipid modification. The span at 29-43 (KGKLPDGGGGEKEKE) shows a compositional bias: basic and acidic residues. The Protein kinase domain maps to 59–319 (YQVGRLLGHG…AAQALSHPWV (261 aa)). Residues 65–73 (LGHGQFGYT) and lysine 88 each bind ATP. Residue aspartate 185 is the Proton acceptor of the active site. Residues 325–355 (ASEIPVDISVLSNMRQFVKYSRFKQFALRAL) form an autoinhibitory domain region. EF-hand domains follow at residues 362 to 397 (EELADLKDQFDAIDVDKSGSISIEEMRHALAKDLPW), 399 to 434 (LKGPRVLEIIQAIDSNTDGLVDFEEFVAATLHIHQM), 441 to 476 (RWGLRCQAAFSKFDLDGDGYITPDELRMVQHTGLKG), and 481 to 508 (LLEEADIDKDGRISLSEFRKLLRTASMS). Ca(2+)-binding residues include aspartate 375, aspartate 377, serine 379, serine 381, glutamate 386, aspartate 412, asparagine 414, aspartate 416, glutamate 423, aspartate 454, aspartate 456, aspartate 458, tyrosine 460, glutamate 465, aspartate 486, aspartate 488, aspartate 490, arginine 492, and glutamate 497.

Belongs to the protein kinase superfamily. Ser/Thr protein kinase family. CDPK subfamily.

The protein localises to the membrane. The catalysed reaction is L-seryl-[protein] + ATP = O-phospho-L-seryl-[protein] + ADP + H(+). It catalyses the reaction L-threonyl-[protein] + ATP = O-phospho-L-threonyl-[protein] + ADP + H(+). Its activity is regulated as follows. Activated by calcium. Autophosphorylation may play an important role in the regulation of the kinase activity. In terms of biological role, may play a role in signal transduction pathways that involve calcium as a second messenger. The sequence is that of Calcium-dependent protein kinase 4 from Oryza sativa subsp. japonica (Rice).